The sequence spans 262 residues: Indole-3-glycerol phosphate synthase (262 aa).

The protein belongs to the TrpC family.

It carries out the reaction 1-(2-carboxyphenylamino)-1-deoxy-D-ribulose 5-phosphate + H(+) = (1S,2R)-1-C-(indol-3-yl)glycerol 3-phosphate + CO2 + H2O. Its pathway is amino-acid biosynthesis; L-tryptophan biosynthesis; L-tryptophan from chorismate: step 4/5. This Nitratiruptor sp. (strain SB155-2) protein is Indole-3-glycerol phosphate synthase.